Reading from the N-terminus, the 116-residue chain is Tachykinin-3 (116 aa).

Residues 1–20 (MRSAMLFAAVLALSLAWTFG) form the signal peptide. Positions 21 to 79 (AACEEPQEQGGRLSKDSDLSLLPPPLLRRLYDSRSISLEGLLKVLSKASVGPKETSLPQ) are excised as a propeptide. Met-91 is modified (methionine amide). Residues 92-116 (GKRNSQPDTPADVVEENTPSFGVLK) form a disordered region. Residues 95-116 (NSQPDTPADVVEENTPSFGVLK) constitute a propeptide that is removed on maturation.

The protein belongs to the tachykinin family.

It is found in the secreted. In terms of biological role, tachykinins are active peptides which excite neurons, evoke behavioral responses, are potent vasodilators and secretagogues, and contract (directly or indirectly) many smooth muscles. Is a critical central regulator of gonadal function. In Rattus norvegicus (Rat), this protein is Tachykinin-3 (Tac3).